We begin with the raw amino-acid sequence, 532 residues long: IQ domain-containing protein IQM4 (532 aa).

Disordered regions lie at residues 47 to 67 and 85 to 104; these read SRTN…TGME and PMNK…RNSL. Residues 56 to 66 are compositionally biased toward basic and acidic residues; the sequence is NPQEKSPKTGM. Over residues 85–94 the composition is skewed to acidic residues; sequence PMNKEDEEIV. The IQ domain maps to 136–165; sequence LDAAATTLQKVYKSYRTRRNLADCAVVVEE. Disordered regions lie at residues 410–443 and 487–513; these read SSGY…KERE and PRIS…PRVR. Residues 487 to 496 are compositionally biased toward polar residues; it reads PRISPGSTRF. The span at 499 to 509 shows a compositional bias: pro residues; it reads PYGPIPSPRPS.

In terms of tissue distribution, expressed in roots, cauline leaves and flowers, and at lower levels in rosette leaves, stems and siliques.

It localises to the cytoplasm. It is found in the nucleus. Functionally, may be involved in biotic and abiotic stress responses. The polypeptide is IQ domain-containing protein IQM4 (Arabidopsis thaliana (Mouse-ear cress)).